A 26-amino-acid chain; its full sequence is Thrombopoietin (26 aa).

The protein belongs to the EPO/TPO family.

It localises to the secreted. Lineage-specific cytokine affecting the proliferation and maturation of megakaryocytes from their committed progenitor cells. It acts at a late stage of megakaryocyte development. It may be the major physiological regulator of circulating platelets. In Sus scrofa (Pig), this protein is Thrombopoietin (THPO).